We begin with the raw amino-acid sequence, 368 residues long: Peptide chain release factor 2 (368 aa).

An N5-methylglutamine modification is found at Gln-251.

Belongs to the prokaryotic/mitochondrial release factor family. Methylated by PrmC. Methylation increases the termination efficiency of RF2.

It localises to the cytoplasm. Peptide chain release factor 2 directs the termination of translation in response to the peptide chain termination codons UGA and UAA. The protein is Peptide chain release factor 2 of Nitratiruptor sp. (strain SB155-2).